The following is a 518-amino-acid chain: Probable cytochrome P450 317a1 (518 aa).

A heme-binding site is contributed by Cys461.

The protein belongs to the cytochrome P450 family. The cofactor is heme.

The protein localises to the endoplasmic reticulum membrane. It is found in the microsome membrane. May be involved in the metabolism of insect hormones and in the breakdown of synthetic insecticides. This Drosophila melanogaster (Fruit fly) protein is Probable cytochrome P450 317a1 (Cyp317a1).